The following is a 408-amino-acid chain: Multidrug resistance protein MdtG (408 aa).

11 helical membrane-spanning segments follow: residues 16–36, 58–78, 92–112, 115–135, 146–166, 173–193, 224–244, 256–276, 290–310, 319–339, and 378–398; these read LIVAWLGCFLTGAAFSLVMPF, IVFSITFLFSAIASPFWGGLA, LGMGIVMVLMGLAQNIWQFLI, ALLGLLGGFVPNANALIATQV, TLSTGGVSGALLGPMAGGLLA, PVFFITASVLILCFFVTLFCI, LFVTTLIIQVATGSIAPILTL, VAFISGMIASVPGVAALLSAP, ILITALIFSVLLLIPMSYVQT, FLLGAADGALLPAVQTLLVYN, and AVFLVTAGVVLFNAVYSWNSL.

Belongs to the major facilitator superfamily. DHA1 family. MdtG (TC 2.A.1.2.20) subfamily.

It is found in the cell inner membrane. Its function is as follows. Confers resistance to fosfomycin and deoxycholate. The protein is Multidrug resistance protein MdtG of Escherichia coli O81 (strain ED1a).